The sequence spans 183 residues: Ribulose bisphosphate carboxylase small subunit, chloroplastic (183 aa).

Residues 1 to 59 (MASSMISSGTVATVSADRPAPAQARMVAPFNGLKSSSAFPVTRKSNDITSIASNGGRVQ) constitute a chloroplast transit peptide.

The protein belongs to the RuBisCO small chain family. As to quaternary structure, heterohexadecamer of 8 large and 8 small subunits.

It localises to the plastid. Its subcellular location is the chloroplast. In terms of biological role, ruBisCO catalyzes two reactions: the carboxylation of D-ribulose 1,5-bisphosphate, the primary event in carbon dioxide fixation, as well as the oxidative fragmentation of the pentose substrate. Both reactions occur simultaneously and in competition at the same active site. Although the small subunit is not catalytic it is essential for maximal activity. This chain is Ribulose bisphosphate carboxylase small subunit, chloroplastic, found in Pyrus pyrifolia (Chinese pear).